The primary structure comprises 290 residues: Xyloglucan endotransglucosylase/hydrolase protein 3 (290 aa).

Residues 1 to 21 (MDYMRIFSVFVVTLWIIRVDA) form the signal peptide. Residues 22-220 (RVFGGRGIEK…WSYSPFIAHF (199 aa)) enclose the GH16 domain. Residue Glu-109 is the Nucleophile of the active site. The active-site Proton donor is Glu-113. Residues Glu-113, 126–128 (QTN), 136–138 (NRE), 199–200 (DW), and Gly-204 each bind xyloglucan. Asn-210 carries an N-linked (GlcNAc...) asparagine glycan. 2 disulfide bridges follow: Cys-228/Cys-240 and Cys-276/Cys-289.

The protein belongs to the glycosyl hydrolase 16 family. XTH group 1 subfamily. Contains at least one intrachain disulfide bond essential for its enzymatic activity. In terms of tissue distribution, predominantly expressed in flower buds.

Its subcellular location is the secreted. It localises to the cell wall. The protein resides in the extracellular space. It is found in the apoplast. The catalysed reaction is breaks a beta-(1-&gt;4) bond in the backbone of a xyloglucan and transfers the xyloglucanyl segment on to O-4 of the non-reducing terminal glucose residue of an acceptor, which can be a xyloglucan or an oligosaccharide of xyloglucan.. Functionally, catalyzes xyloglucan endohydrolysis (XEH) and/or endotransglycosylation (XET). Cleaves and religates xyloglucan polymers, an essential constituent of the primary cell wall, and thereby participates in cell wall construction of growing tissues. This Arabidopsis thaliana (Mouse-ear cress) protein is Xyloglucan endotransglucosylase/hydrolase protein 3 (XTH3).